Consider the following 247-residue polypeptide: Translation initiation factor IF-3 (247 aa).

2 disordered regions span residues methionine 1–arginine 20 and leucine 188–serine 247. The tract at residues alanine 182–serine 247 is needed for vegetative and developmental functions, but not for viability. Positions alanine 207–glycine 217 are enriched in low complexity. The span at alanine 218 to alanine 232 shows a compositional bias: basic and acidic residues. Over residues glutamine 233–serine 247 the composition is skewed to low complexity.

The protein belongs to the IF-3 family. Monomer.

Its subcellular location is the cytoplasm. IF-3 binds to the 30S ribosomal subunit and shifts the equilibrium between 70S ribosomes and their 50S and 30S subunits in favor of the free subunits, thus enhancing the availability of 30S subunits on which protein synthesis initiation begins. This Myxococcus xanthus protein is Translation initiation factor IF-3.